A 501-amino-acid polypeptide reads, in one-letter code: Probable cytochrome P450 6t3 (501 aa).

Residue Cys444 coordinates heme.

This sequence belongs to the cytochrome P450 family. Heme is required as a cofactor.

It localises to the endoplasmic reticulum membrane. It is found in the microsome membrane. Functionally, may be involved in the metabolism of insect hormones and in the breakdown of synthetic insecticides. This is Probable cytochrome P450 6t3 (Cyp6t3) from Drosophila melanogaster (Fruit fly).